Consider the following 967-residue polypeptide: RNA polymerase II C-terminal domain phosphatase-like 1 (967 aa).

A Nuclear localization signal (NLS) motif is present at residues Arg38–Lys41. The FCP1 homology domain maps to Leu151–Val401. 2 disordered regions span residues Ser548–Arg611 and Met643–Asp712. Pro residues predominate over residues Pro590–Ala603. Positions Arg665–Leu684 are enriched in basic and acidic residues. DRBM domains are found at residues Thr724 to Asp792 and Gly855 to Ser925. The disordered stretch occupies residues Gly928–Ser967. Residues Ser945–Ser967 are required for nuclear localization (NLS). Residues Lys947 to Pro951 carry the Nuclear localization signal (NLS) motif. Positions Arg955–Ser967 are enriched in polar residues.

In terms of assembly, interacts with FREE1, ANAC019, MYB3, MYB4 and MYB32. Binds to DMS3. Interacts with RCF3. Interacts with RS40 and RS41. Interacts with EIF4A3. Interacts with UPF3. Mg(2+) is required as a cofactor. The cofactor is Co(2+). Mn(2+) serves as cofactor. As to expression, expressed at very low levels in roots, leaves, stems, flowers and siliques.

It is found in the nucleus. It localises to the nucleus speckle. It catalyses the reaction O-phospho-L-seryl-[protein] + H2O = L-seryl-[protein] + phosphate. The enzyme catalyses O-phospho-L-threonyl-[protein] + H2O = L-threonyl-[protein] + phosphate. Processively dephosphorylates 'Ser-5' but not 'Ser-2' of the heptad repeats YSPTSPS in the C-terminal domain of the largest RNA polymerase II subunit (RPB1). This promotes the activity of RNA polymerase II. Together with CPL2, required for male gametes fertility. Multifunctional regulator that modulates plant growth, stress, and phytohormones responses. Negative regulator of stress gene transcription involved in abscisic acid (ABA) mediated and jasmonic acid (JA) mediated signaling pathways, NaCl, osmotic stress, wounding, and cold resistance. Negatively regulates the expression of jasmonic acid (JA) biosynthetic genes in response to wounding. Forms a complex with RCF3 that modulates co-transcriptional processes such as mRNA capping and polyadenylation, and functions to repress stress-inducible gene expression. Dephosphorylates RCF3. Involved in the dephosphorylation of EIF4A3. This dephosphorylation retains EIF4A3 in the nucleus and limits its accumulation in the cytoplasm. Is essential for the degradation of the nonsense-mediated mRNA decay (NMD) transcripts. The chain is RNA polymerase II C-terminal domain phosphatase-like 1 from Arabidopsis thaliana (Mouse-ear cress).